Here is a 134-residue protein sequence, read N- to C-terminus: Loki profilin-1 (134 aa).

Residues 55-62 (LALGKKGI) are loki loop.

It belongs to the Asgard profilin family.

It is found in the cytoplasm. The protein localises to the cytoskeleton. Inhibition of rabbit actin polymerization is reduced by phosphatidylinositol-(4,5)-P2(1,2-dipalmitoyl), a soluble form of the phospholipid phosphatidylinositol, suggesting an unknown lipid might regulate actin-profilin interaction in vivo. Its function is as follows. Binds to actin and affects the structure of the cytoskeleton. At high concentrations inhibits spontaneous rabbit actin nucleation. This strongly suggests this archaea has a profilin-regulated actin system, and actin-type genes can be identified in this organism. The chain is Loki profilin-1 from Lokiarchaeum sp. (strain GC14_75).